The chain runs to 178 residues: Large ribosomal subunit protein uL6 (178 aa).

This sequence belongs to the universal ribosomal protein uL6 family. Part of the 50S ribosomal subunit.

Its function is as follows. This protein binds to the 23S rRNA, and is important in its secondary structure. It is located near the subunit interface in the base of the L7/L12 stalk, and near the tRNA binding site of the peptidyltransferase center. In Thermoplasma acidophilum (strain ATCC 25905 / DSM 1728 / JCM 9062 / NBRC 15155 / AMRC-C165), this protein is Large ribosomal subunit protein uL6.